Here is a 231-residue protein sequence, read N- to C-terminus: NADH-ubiquinone oxidoreductase chain 4 (231 aa).

The next 7 helical transmembrane spans lie at 1-21, 34-54, 63-85, 89-111, 128-148, 156-176, and 211-231; these read PIAG…YGII, LFLP…LTCL, IAYS…TPWG, AMAL…NTTY, ILPM…AIPP, LLIM…LGLS, and LLIA…ELVI.

Belongs to the complex I subunit 4 family.

It localises to the mitochondrion membrane. The enzyme catalyses a ubiquinone + NADH + 5 H(+)(in) = a ubiquinol + NAD(+) + 4 H(+)(out). Its function is as follows. Core subunit of the mitochondrial membrane respiratory chain NADH dehydrogenase (Complex I) that is believed to belong to the minimal assembly required for catalysis. Complex I functions in the transfer of electrons from NADH to the respiratory chain. The immediate electron acceptor for the enzyme is believed to be ubiquinone. The chain is NADH-ubiquinone oxidoreductase chain 4 (MT-ND4) from Crotalus adamanteus (Eastern diamondback rattlesnake).